A 638-amino-acid polypeptide reads, in one-letter code: Threonine--tRNA ligase (638 aa).

One can recognise a TGS domain in the interval M1–T61. The segment at D242–P533 is catalytic. Positions 333, 384, and 510 each coordinate Zn(2+).

Belongs to the class-II aminoacyl-tRNA synthetase family. As to quaternary structure, homodimer. The cofactor is Zn(2+).

The protein resides in the cytoplasm. It catalyses the reaction tRNA(Thr) + L-threonine + ATP = L-threonyl-tRNA(Thr) + AMP + diphosphate + H(+). Catalyzes the attachment of threonine to tRNA(Thr) in a two-step reaction: L-threonine is first activated by ATP to form Thr-AMP and then transferred to the acceptor end of tRNA(Thr). Also edits incorrectly charged L-seryl-tRNA(Thr). The polypeptide is Threonine--tRNA ligase (Prochlorococcus marinus (strain MIT 9211)).